We begin with the raw amino-acid sequence, 134 residues long: Small ribosomal subunit protein uS9c (134 aa).

It belongs to the universal ribosomal protein uS9 family.

The protein resides in the plastid. The protein localises to the chloroplast. The sequence is that of Small ribosomal subunit protein uS9c (rps9) from Thalassiosira pseudonana (Marine diatom).